Reading from the N-terminus, the 220-residue chain is MTINNINSFIDHTQLKPEATPGQIEKLCQEAIDYKFKAVCVNPVHVNLAANLLKDSEVEIASVVGFPLGASATDVKEYEAKKAVEHGASEIDMVINIGLLKNEQDMEVIEDISSVVNTVPVGIVVKVIIETCLLSDEEKIKACELAKRAGAHYVKTSTGFSSSGATVEDVKIMKKTVGEKLGVKASGGIRDLETAQKMIEAGATRIGASKSVEIVKSQSN.

Aspartate 92 (proton donor/acceptor) is an active-site residue. Lysine 155 serves as the catalytic Schiff-base intermediate with acetaldehyde. Lysine 184 functions as the Proton donor/acceptor in the catalytic mechanism.

Belongs to the DeoC/FbaB aldolase family. DeoC type 1 subfamily.

It is found in the cytoplasm. It carries out the reaction 2-deoxy-D-ribose 5-phosphate = D-glyceraldehyde 3-phosphate + acetaldehyde. It functions in the pathway carbohydrate degradation; 2-deoxy-D-ribose 1-phosphate degradation; D-glyceraldehyde 3-phosphate and acetaldehyde from 2-deoxy-alpha-D-ribose 1-phosphate: step 2/2. Functionally, catalyzes a reversible aldol reaction between acetaldehyde and D-glyceraldehyde 3-phosphate to generate 2-deoxy-D-ribose 5-phosphate. This is Deoxyribose-phosphate aldolase from Natranaerobius thermophilus (strain ATCC BAA-1301 / DSM 18059 / JW/NM-WN-LF).